The sequence spans 177 residues: Thymidine kinase (177 aa).

11–18 (GPMFSGKS) provides a ligand contact to ATP. Catalysis depends on Glu-83, which acts as the Proton acceptor. Residue Phe-113 participates in substrate binding. Zn(2+) is bound by residues Cys-138 and Cys-141. 157–161 (IEIIG) serves as a coordination point for substrate. The Zn(2+) site is built by Cys-170 and Cys-173.

The protein belongs to the thymidine kinase family. In terms of assembly, homotetramer. Two molecules of substrate bind to each enzyme tetramer.

It carries out the reaction thymidine + ATP = dTMP + ADP + H(+). Phosphorylates thymidine and thymidine analogs, such as azidothymidine (AZT). Part of the salvage pathway for pyrimidine deoxyribonucleotide synthesis. The polypeptide is Thymidine kinase (OPG101) (Cynomys gunnisoni (Gunnison's prairie dog)).